The sequence spans 286 residues: DNA-directed RNA polymerase subunit Rpo3 (286 aa).

This sequence belongs to the archaeal Rpo3/eukaryotic RPB3 RNA polymerase subunit family. As to quaternary structure, part of the RNA polymerase complex.

Its subcellular location is the cytoplasm. The catalysed reaction is RNA(n) + a ribonucleoside 5'-triphosphate = RNA(n+1) + diphosphate. In terms of biological role, DNA-dependent RNA polymerase (RNAP) catalyzes the transcription of DNA into RNA using the four ribonucleoside triphosphates as substrates. This is DNA-directed RNA polymerase subunit Rpo3 from Aeropyrum pernix (strain ATCC 700893 / DSM 11879 / JCM 9820 / NBRC 100138 / K1).